A 392-amino-acid polypeptide reads, in one-letter code: tRNA (guanine-N(7)-)-methyltransferase (392 aa).

The S-adenosyl-L-methionine site is built by Glu123, Glu148, and Asp175. Lys201 and Asp231 together coordinate substrate.

The protein belongs to the class I-like SAM-binding methyltransferase superfamily. TrmB family.

It catalyses the reaction guanosine(46) in tRNA + S-adenosyl-L-methionine = N(7)-methylguanosine(46) in tRNA + S-adenosyl-L-homocysteine. The protein operates within tRNA modification; N(7)-methylguanine-tRNA biosynthesis. In terms of biological role, catalyzes the formation of N(7)-methylguanine at position 46 (m7G46) in tRNA. In Campylobacter jejuni subsp. doylei (strain ATCC BAA-1458 / RM4099 / 269.97), this protein is tRNA (guanine-N(7)-)-methyltransferase.